A 434-amino-acid chain; its full sequence is GTPase Obg (434 aa).

The 158-residue stretch at Met-1–Leu-158 folds into the Obg domain. Residues Ala-159–Asp-336 form the OBG-type G domain. Residues Gly-165–Ser-172, Phe-190–Val-194, Asp-212–Gly-215, Asn-282–Asp-285, and Ser-317–Leu-319 contribute to the GTP site. Mg(2+) contacts are provided by Ser-172 and Thr-192. The region spanning Gly-356 to Asp-434 is the OCT domain.

It belongs to the TRAFAC class OBG-HflX-like GTPase superfamily. OBG GTPase family. Monomer. The cofactor is Mg(2+).

It is found in the cytoplasm. Functionally, an essential GTPase which binds GTP, GDP and possibly (p)ppGpp with moderate affinity, with high nucleotide exchange rates and a fairly low GTP hydrolysis rate. Plays a role in control of the cell cycle, stress response, ribosome biogenesis and in those bacteria that undergo differentiation, in morphogenesis control. The polypeptide is GTPase Obg (Streptococcus pneumoniae (strain Hungary19A-6)).